Here is a 287-residue protein sequence, read N- to C-terminus: Heterodimeric geranylgeranyl pyrophosphate synthase small subunit 2, chloroplastic (287 aa).

Residues Glu103 and Asp109 each contribute to the Mg(2+) site. The dimethylallyl diphosphate site is built by Lys204, Gln241, and Lys250.

Belongs to the FPP/GGPP synthase family. As to quaternary structure, part of a heterodimeric geranyl(geranyl)diphosphate synthase. The cofactor is Mg(2+). As to expression, mainly expressed in trichomes, and, to a lower extent, in roots, leaves, flowers and stems.

Its subcellular location is the plastid. It is found in the chloroplast thylakoid membrane. In terms of biological role, heterodimeric geranyl(geranyl)-diphosphate (GPP) synthase small subunit. The small subunit alone is inactive in vitro while the large subunit GGPPS1 catalyzes mainly the production of geranygeranyl-diphosphate in vitro. Upon association of the two subunits, the product profile changes and the production of gerany-diphosphate is strongly increased. The chain is Heterodimeric geranylgeranyl pyrophosphate synthase small subunit 2, chloroplastic from Cannabis sativa (Hemp).